Reading from the N-terminus, the 616-residue chain is Homeodomain-interacting protein kinase 4 (616 aa).

The Protein kinase domain maps to 11-347; sequence YDIIEVLGKG…PSAALRHPFV (337 aa). Residues 17–25 and Lys-40 contribute to the ATP site; that span reads LGKGTFGEV. Asp-136 functions as the Proton acceptor in the catalytic mechanism. The segment at 485 to 616 is disordered; the sequence is RHKARKPPAG…SFLQHVTGHH (132 aa). Residues 496–511 are compositionally biased toward polar residues; that stretch reads KSDSNLSNLIRLSQVS. Residue Ser-511 is modified to Phosphoserine.

It belongs to the protein kinase superfamily. CMGC Ser/Thr protein kinase family. HIPK subfamily. Post-translationally, autophosphorylated.

It is found in the cytoplasm. The catalysed reaction is L-seryl-[protein] + ATP = O-phospho-L-seryl-[protein] + ADP + H(+). The enzyme catalyses L-threonyl-[protein] + ATP = O-phospho-L-threonyl-[protein] + ADP + H(+). Its function is as follows. Protein kinase that phosphorylates TP53, and thus induces TP53 repression of BIRC5 promoter. May act as a corepressor of transcription factors (Potential). The protein is Homeodomain-interacting protein kinase 4 (HIPK4) of Macaca fascicularis (Crab-eating macaque).